A 432-amino-acid chain; its full sequence is Anaerobic glycerol-3-phosphate dehydrogenase subunit B (432 aa).

Belongs to the anaerobic G-3-P dehydrogenase subunit B family. As to quaternary structure, composed of a catalytic GlpA/B dimer and of membrane bound GlpC. FMN serves as cofactor.

It carries out the reaction a quinone + sn-glycerol 3-phosphate = dihydroxyacetone phosphate + a quinol. It functions in the pathway polyol metabolism; glycerol degradation via glycerol kinase pathway; glycerone phosphate from sn-glycerol 3-phosphate (anaerobic route): step 1/1. Its function is as follows. Conversion of glycerol 3-phosphate to dihydroxyacetone. Uses fumarate or nitrate as electron acceptor. The protein is Anaerobic glycerol-3-phosphate dehydrogenase subunit B (glpB) of Haemophilus influenzae (strain ATCC 51907 / DSM 11121 / KW20 / Rd).